Reading from the N-terminus, the 528-residue chain is Protein MGF 505-7R (528 aa).

ANK repeat units lie at residues 129 to 158 (ECDL…LLNV), 261 to 290 (HVNR…VPHK), and 292 to 322 (IERM…KVKN).

Belongs to the asfivirus MGF 505 family. Interacts with host STING1. Interacts with host JAK1; this interaction leads to JAK1 degradation. Interacts with host JAK2; this interaction leads to JAK2 degradation. Interacts with host RELA; this interaction inhibits NF-kappa-B promoter activity.

The protein localises to the host cytoplasm. Functionally, plays a role in virus cell tropism, and may be required for efficient virus replication in macrophages. Interferes with host NF-kappa-B promoter activity mediated by TLR8. Mechanistically, inhibits the phosphorylation and subsequent nuclear translocation of host NF-kappa-B RELA subunit downstream of TLR8. Promotes the expression of the autophagy-related protein host ULK1 to degrade host STING and inhibit the interferon response. Also inhibits JAK1- and JAK2-mediated signaling and thus negatively regulates the IFN-gamma signaling. This chain is Protein MGF 505-7R, found in Ornithodoros (relapsing fever ticks).